We begin with the raw amino-acid sequence, 280 residues long: 2-dehydro-3-deoxyphosphooctonate aldolase (280 aa).

The protein belongs to the KdsA family.

The protein resides in the cytoplasm. It catalyses the reaction D-arabinose 5-phosphate + phosphoenolpyruvate + H2O = 3-deoxy-alpha-D-manno-2-octulosonate-8-phosphate + phosphate. It participates in carbohydrate biosynthesis; 3-deoxy-D-manno-octulosonate biosynthesis; 3-deoxy-D-manno-octulosonate from D-ribulose 5-phosphate: step 2/3. Its pathway is bacterial outer membrane biogenesis; lipopolysaccharide biosynthesis. The sequence is that of 2-dehydro-3-deoxyphosphooctonate aldolase from Coxiella burnetii (strain Dugway 5J108-111).